A 436-amino-acid chain; its full sequence is Coiled-coil domain-containing protein 71 (436 aa).

Residues 95 to 119 (ATSLPARAPQTAKSVPTGQTTLLPV) form a disordered region. The segment covering 105-116 (TAKSVPTGQTTL) has biased composition (polar residues). Ser-129 bears the Phosphoserine mark. Disordered stretches follow at residues 210-258 (LRKG…MKGR) and 314-405 (ALRG…KVDR). Positions 264-334 (KTVRGKAPRT…QAKAKAARTK (71 aa)) form a coiled coil. Residues 329–340 (KAARTKHKKRPK) show a composition bias toward basic residues. Over residues 344-359 (QTRTGRTSLKNSSETV) the composition is skewed to polar residues. The span at 373–386 (PPKKRARCVPRSKA) shows a compositional bias: basic residues.

The sequence is that of Coiled-coil domain-containing protein 71 (Ccdc71) from Rattus norvegicus (Rat).